Here is a 398-residue protein sequence, read N- to C-terminus: cAMP-dependent protein kinase, catalytic subunit-like (398 aa).

One can recognise a Protein kinase domain in the interval 90–344 (LERIITIGKG…TQDVKDHKWF (255 aa)). Residues 96–104 (IGKGTFGRV) and Lys-119 contribute to the ATP site. The active-site Proton acceptor is the Asp-213. The region spanning 345–398 (EKVNWDDTLHLRVEPPIVPTLYHPGDTGNFDDYEEDTTGGPLCSQRDRDLFAEW) is the AGC-kinase C-terminal domain.

Belongs to the protein kinase superfamily. Ser/Thr protein kinase family. cAMP subfamily.

The enzyme catalyses L-seryl-[protein] + ATP = O-phospho-L-seryl-[protein] + ADP + H(+). It carries out the reaction L-threonyl-[protein] + ATP = O-phospho-L-threonyl-[protein] + ADP + H(+). The chain is cAMP-dependent protein kinase, catalytic subunit-like from Caenorhabditis elegans.